The following is a 718-amino-acid chain: MFSVESLERAELCESLLTWIQTFNVDAPCQTVEDLTNGVVMAQVLQKIDPAYFDENWLNRIKTEVGDNWRLKISNLKKILKGILDYNHEILGQQINDFTLPDVNLIGEHSDAAELGRMLQLILGCAVNCEQKQEYIQAIMMMEESVQHVVMTAIQELMSKESPVSAGNDAYVDLDRQLKKTTEELNEALSAKEEIAQRCHELDMQVAALQEEKSSLLAENQVLMERLNQSDSIEDPNSPAGRRHLQLQTQLEQLQEETFRLEAAKDDYRIRCEELEKEISELRQQNDELTTLADEAQSLKDEIDVLRHSSDKVSKLEGQVESYKKKLEDLGDLRRQVKLLEEKNTMYMQNTVSLEEELRKANAARSQLETYKRQVVELQNRLSEESKKADKLDFEYKRLKEKVDSLQKEKDRLRTERDSLKETIEELRCVQAQEGQLTTQGLMPLGSQESSDSLAAEIVTPEIREKLIRLQHENKMLKLNQEGSDNEKIALLQSLLDDANLRKNELETENRLVNQRLLEVQSQVEELQKSLQDQGSKAEDSVLLKKKLEEHLEKLHEANNELQKKRAIIEDLEPRFNNSSLKIEELQEALRKKEEEMKQMEERYKKYLEKAKSVIRTLDPKQNQGAAPEIQALKNQLQERDRLFHSLEKEYEKTKSQREMEEKYIVSAWYNMGMTLHKKAAEDRLASTGSGQSFLARQRQATSSRRSYPGHVQPATAR.

At M1 the chain carries N-acetylmethionine. The interval 1-164 (MFSVESLERA…QELMSKESPV (164 aa)) is sufficient for interaction with microtubules. 2 positions are modified to phosphoserine: S3 and S6. Residues 10–126 (AELCESLLTW…RMLQLILGCA (117 aa)) enclose the Calponin-homology (CH) domain. 2 coiled-coil regions span residues 167-433 (GNDA…VQAQ) and 462-667 (EIRE…YIVS). The residue at position 238 (S238) is a Phosphoserine. Residues 553-718 (EKLHEANNEL…PGHVQPATAR (166 aa)) are required for association with Golgi. The interval 556–718 (HEANNELQKK…PGHVQPATAR (163 aa)) is required for interaction with MSR1. The segment at 682 to 718 (EDRLASTGSGQSFLARQRQATSSRRSYPGHVQPATAR) is disordered. Phosphoserine is present on residues S693 and S707. Low complexity predominate over residues 696 to 707 (ARQRQATSSRRS).

The protein belongs to the hook family. Self-associates. Component of the FTS/Hook/FHIP complex (FHF complex), composed of AKTIP/FTS, FHIP1B, and one or more members of the Hook family of proteins HOOK1, HOOK2, and HOOK3. May interact directly with AKTIP/FTS, HOOK1 and HOOK2. Associates with several subunits of the homotypic vesicular sorting complex (the HOPS complex) including VPS16 and VPS41; these interactions may be indirect. Interacts with MSR1, and this association is stimulated by ligand binding to MSR1. Interacts with microtubules. Part of a tripartite complex with dynein and dynactin, acts an adapter linking the dynein motor complex and dynactin. Interacts with dynein intermediate chain and dynactin (DCTN1). Interacts with CCDC181. Interacts with LRGUK. As to quaternary structure, (Microbial infection) Interacts with Salmonella typhimurium spiC.

It localises to the cytoplasm. Its subcellular location is the cytoskeleton. It is found in the golgi apparatus. Functionally, acts as an adapter protein linking the dynein motor complex to various cargos and converts dynein from a non-processive to a highly processive motor in the presence of dynactin. Facilitates the interaction between dynein and dynactin and activates dynein processivity (the ability to move along a microtubule for a long distance without falling off the track). Predominantly recruits 2 dyneins, which increases both the force and speed of the microtubule motor. Component of the FTS/Hook/FHIP complex (FHF complex). The FHF complex may function to promote vesicle trafficking and/or fusion via the homotypic vesicular protein sorting complex (the HOPS complex). May regulate clearance of endocytosed receptors such as MSR1. Participates in defining the architecture and localization of the Golgi complex. FHF complex promotes the distribution of AP-4 complex to the perinuclear area of the cell. (Microbial infection) May serve as a target for the spiC protein from Salmonella typhimurium, which inactivates it, leading to a strong alteration in cellular trafficking. The chain is Protein Hook homolog 3 from Homo sapiens (Human).